We begin with the raw amino-acid sequence, 216 residues long: Protein YabP (216 aa).

This Escherichia coli (strain K12) protein is Protein YabP (yabP).